The sequence spans 196 residues: Ribonuclease HII (196 aa).

The region spanning Asn-9–Val-196 is the RNase H type-2 domain. A divalent metal cation contacts are provided by Asp-15, Glu-16, and Asp-107.

This sequence belongs to the RNase HII family. It depends on Mn(2+) as a cofactor. Mg(2+) is required as a cofactor.

The protein localises to the cytoplasm. The catalysed reaction is Endonucleolytic cleavage to 5'-phosphomonoester.. Endonuclease that specifically degrades the RNA of RNA-DNA hybrids. In Proteus mirabilis (strain HI4320), this protein is Ribonuclease HII.